The sequence spans 507 residues: Cytochrome P450 71A4 (507 aa).

The chain crosses the membrane as a helical span at residues Val-3–His-23. Cys-448 provides a ligand contact to heme.

This sequence belongs to the cytochrome P450 family. Requires heme as cofactor.

The protein resides in the membrane. Its function is as follows. May have a role in maturation, such as during flavor formation or other metabolite production specific to aging tissues. The protein is Cytochrome P450 71A4 (CYP71A4) of Solanum melongena (Eggplant).